Consider the following 2347-residue polypeptide: Proto-oncogene tyrosine-protein kinase ROS (2347 aa).

Positions 1 to 27 are cleaved as a signal peptide; that stretch reads MKNIYCLIPKLVNFATLGCLWISVVQC. At 28 to 1859 the chain is on the extracellular side; that stretch reads TVLNSCLKSC…LVGDDFWIPE (1832 aa). N-linked (GlcNAc...) asparagine glycosylation is found at Asn-52, Asn-114, and Asn-123. Fibronectin type-III domains are found at residues 101–196 and 197–285; these read LPTA…VPET and APLI…SSSA. Residues Asn-324, Asn-352, Asn-396, Asn-471, Asn-607, Asn-628, Asn-706, Asn-714, Asn-732, Asn-939, Asn-961, Asn-1015, Asn-1087, Asn-1090, Asn-1095, Asn-1211, Asn-1272, Asn-1330, Asn-1458, Asn-1461, Asn-1474, Asn-1499, Asn-1565, Asn-1669, Asn-1715, Asn-1738, and Asn-1808 are each glycosylated (N-linked (GlcNAc...) asparagine). The Fibronectin type-III 3 domain maps to 557-671; sequence LPGRPQELSV…EPSVGTTLVP (115 aa). 2 consecutive Fibronectin type-III domains span residues 947–1042 and 1043–1150; these read IPDS…TVPS and APEN…TSEI. Fibronectin type-III domains are found at residues 1450 to 1556, 1557 to 1656, 1658 to 1751, and 1752 to 1854; these read DTVE…TKNG, VPEA…VEMF, TPEK…TKAG, and VPNK…VGDD. A helical transmembrane segment spans residues 1860 to 1882; sequence TSFILTIIVGIFLVVTIPLTFVW. The Cytoplasmic portion of the chain corresponds to 1883–2347; it reads HRRLKNQKSA…THSGYGDGSD (465 aa). One can recognise a Protein kinase domain in the interval 1945–2222; the sequence is LTLRLLLGSG…DQLQLFRNFF (278 aa). ATP-binding positions include 1951–1959 and Lys-1980; that span reads LGSGAFGEV. Asp-2079 serves as the catalytic Proton acceptor. Tyr-2274 is subject to Phosphotyrosine; by autocatalysis. The interval 2284–2311 is disordered; that stretch reads GEEKSEGPLGSQESESCGLRKEEKEPHA. The segment covering 2301–2311 has biased composition (basic and acidic residues); sequence GLRKEEKEPHA. Phosphotyrosine; by autocatalysis is present on Tyr-2334.

The protein belongs to the protein kinase superfamily. Tyr protein kinase family. Insulin receptor subfamily. Interacts with PTPN6 (via SH2 1 domain); the interaction is direct and promotes ROS1 dephosphorylation. Interacts with PTPN11; may activate the PI3 kinase-mTOR signaling pathway. Interacts with VAV3; constitutive interaction mediating VAV3 phosphorylation. In terms of processing, phosphorylated. Probably autophosphorylates. Phosphorylation at Tyr-2274 is required for the interaction with PTPN6 that mediates ROS1 dephosphorylation. Phosphorylation at Tyr-2274 stimulates the kinase activity and the activation of the ERK1 signaling cascade. Phosphorylation at Tyr-2274 and/or Tyr-2334 recruits PTPN11. Expressed in brain. Expression is increased in primary gliomas.

Its subcellular location is the cell membrane. The enzyme catalyses L-tyrosyl-[protein] + ATP = O-phospho-L-tyrosyl-[protein] + ADP + H(+). With respect to regulation, inhibited by dephosphorylation by PTPN6. Receptor tyrosine kinase (RTK) that plays a role in epithelial cell differentiation and regionalization of the proximal epididymal epithelium. NELL2 is an endogenous ligand for ROS1. Upon endogenous stimulation by NELL2, ROS1 activates the intracellular signaling pathway and triggers epididymal epithelial differentiation and subsequent sperm maturation. May activate several downstream signaling pathways related to cell differentiation, proliferation, growth and survival including the PI3 kinase-mTOR signaling pathway. Mediates the phosphorylation of PTPN11, an activator of this pathway. May also phosphorylate and activate the transcription factor STAT3 to control anchorage-independent cell growth. Mediates the phosphorylation and the activation of VAV3, a guanine nucleotide exchange factor regulating cell morphology. May activate other downstream signaling proteins including AKT1, MAPK1, MAPK3, IRS1 and PLCG2. The polypeptide is Proto-oncogene tyrosine-protein kinase ROS (ROS1) (Homo sapiens (Human)).